A 474-amino-acid polypeptide reads, in one-letter code: tRNA-2-methylthio-N(6)-dimethylallyladenosine synthase (474 aa).

The MTTase N-terminal domain occupies 3 to 120 (KKLHIKTWGC…LPEMINSVRG (118 aa)). The [4Fe-4S] cluster site is built by C12, C49, C83, C157, C161, and C164. One can recognise a Radical SAM core domain in the interval 143–375 (RAEGPTAFVS…QERINQQAMA (233 aa)). Positions 378-441 (RRMLGTTQRI…PNSLRGKVVR (64 aa)) constitute a TRAM domain.

This sequence belongs to the methylthiotransferase family. MiaB subfamily. In terms of assembly, monomer. Requires [4Fe-4S] cluster as cofactor.

The protein localises to the cytoplasm. It carries out the reaction N(6)-dimethylallyladenosine(37) in tRNA + (sulfur carrier)-SH + AH2 + 2 S-adenosyl-L-methionine = 2-methylsulfanyl-N(6)-dimethylallyladenosine(37) in tRNA + (sulfur carrier)-H + 5'-deoxyadenosine + L-methionine + A + S-adenosyl-L-homocysteine + 2 H(+). Catalyzes the methylthiolation of N6-(dimethylallyl)adenosine (i(6)A), leading to the formation of 2-methylthio-N6-(dimethylallyl)adenosine (ms(2)i(6)A) at position 37 in tRNAs that read codons beginning with uridine. This Escherichia coli (strain SMS-3-5 / SECEC) protein is tRNA-2-methylthio-N(6)-dimethylallyladenosine synthase.